Here is a 97-residue protein sequence, read N- to C-terminus: Secreted Ly-6/uPAR domain-containing protein 2 (97 aa).

The first 22 residues, 1 to 22 (MQLGTGLLLAAVLSLQLAAAEA), serve as a signal peptide directing secretion. Disulfide bonds link Cys-25/Cys-47, Cys-28/Cys-34, Cys-40/Cys-68, Cys-72/Cys-88, and Cys-89/Cys-94. Positions 25–95 (CHQCTGFGGC…IACCQTSLCN (71 aa)) constitute a UPAR/Ly6 domain.

In terms of assembly, interacts with CHRNA3, CHRNA4, CHRNA5, CHRNA7, CHRNB2 and CHRNB4. Interacts with CHRM1 and CHRM3 probably in an allosteric manner. Expressed at highest levels in cervix and esophagus, followed by adult and fetal skin. Expressed at lower levels in brain, lung, stomach, small intestine, colon, rectum, uterus, and thymus. Not detected in spleen nor bone marrow. Up-regulated 3-fold in psoriatic lesional skin. In the epidermis, predominantly produced by keratinocytes of the suprabasal epidermal compartment (at protein level). In attached gingiva, produced at highest levels by basal cells located in the lowermost epithelial layers (at protein level). Detected in serum (at protein level).

The protein localises to the secreted. Functionally, binds and may modulate the functional properties of nicotinic and muscarinic acetylcholine receptors. May regulate keratinocytes proliferation, differentiation and apoptosis. In vitro moderately inhibits ACh-evoked currents of alpha-3:beta-2-containing nAChRs and strongly these of alpha-4:beta-2-containing nAChRs, modulates alpha-7-containing nAChRs, and inhibits nicotine-induced signaling probably implicating alpha-3:beta-4-containing nAChRs. Proposed to act on alpha-3:beta-2 and alpha-7 nAChRs in an orthosteric, and on mAChRs, such as CHRM1 and CHRM3, in an allosteric manner. The sequence is that of Secreted Ly-6/uPAR domain-containing protein 2 from Homo sapiens (Human).